Here is a 910-residue protein sequence, read N- to C-terminus: Leucine--tRNA ligase (910 aa).

Positions 42 to 52 match the 'HIGH' region motif; it reads PYPSGKLHMGH. The 'KMSKS' region motif lies at 658-662; sequence TMSKS. Residue Lys661 coordinates ATP.

This sequence belongs to the class-I aminoacyl-tRNA synthetase family.

It localises to the cytoplasm. It catalyses the reaction tRNA(Leu) + L-leucine + ATP = L-leucyl-tRNA(Leu) + AMP + diphosphate. This chain is Leucine--tRNA ligase, found in Acidovorax ebreus (strain TPSY) (Diaphorobacter sp. (strain TPSY)).